Reading from the N-terminus, the 119-residue chain is NADH-quinone oxidoreductase subunit A (119 aa).

A run of 3 helical transmembrane segments spans residues 9-29 (VLLF…LGYV), 63-83 (LVAI…PWAV), and 88-108 (VGMA…VGFA).

It belongs to the complex I subunit 3 family. In terms of assembly, NDH-1 is composed of 14 different subunits. Subunits NuoA, H, J, K, L, M, N constitute the membrane sector of the complex.

It is found in the cell inner membrane. It catalyses the reaction a quinone + NADH + 5 H(+)(in) = a quinol + NAD(+) + 4 H(+)(out). In terms of biological role, NDH-1 shuttles electrons from NADH, via FMN and iron-sulfur (Fe-S) centers, to quinones in the respiratory chain. The immediate electron acceptor for the enzyme in this species is believed to be ubiquinone. Couples the redox reaction to proton translocation (for every two electrons transferred, four hydrogen ions are translocated across the cytoplasmic membrane), and thus conserves the redox energy in a proton gradient. The protein is NADH-quinone oxidoreductase subunit A of Verminephrobacter eiseniae (strain EF01-2).